The primary structure comprises 254 residues: Enolase-phosphatase E1 (254 aa).

Mg(2+) is bound by residues Asp-13 and Glu-15. Residues 127–128 (SS) and Lys-173 each bind substrate. Asp-200 contributes to the Mg(2+) binding site.

Belongs to the HAD-like hydrolase superfamily. MasA/MtnC family. As to quaternary structure, monomer. It depends on Mg(2+) as a cofactor.

It localises to the cytoplasm. The protein resides in the nucleus. The enzyme catalyses 5-methylsulfanyl-2,3-dioxopentyl phosphate + H2O = 1,2-dihydroxy-5-(methylsulfanyl)pent-1-en-3-one + phosphate. Its pathway is amino-acid biosynthesis; L-methionine biosynthesis via salvage pathway; L-methionine from S-methyl-5-thio-alpha-D-ribose 1-phosphate: step 3/6. It participates in amino-acid biosynthesis; L-methionine biosynthesis via salvage pathway; L-methionine from S-methyl-5-thio-alpha-D-ribose 1-phosphate: step 4/6. Bifunctional enzyme that catalyzes the enolization of 2,3-diketo-5-methylthiopentyl-1-phosphate (DK-MTP-1-P) into the intermediate 2-hydroxy-3-keto-5-methylthiopentenyl-1-phosphate (HK-MTPenyl-1-P), which is then dephosphorylated to form the acireductone 1,2-dihydroxy-3-keto-5-methylthiopentene (DHK-MTPene). In Sclerotinia sclerotiorum (strain ATCC 18683 / 1980 / Ss-1) (White mold), this protein is Enolase-phosphatase E1 (utr4).